The following is a 549-amino-acid chain: Cation/acetate symporter ActP (549 aa).

13 consecutive transmembrane segments (helical) span residues 33 to 53 (WQAIIMFLIFVVFTLGITYWA), 77 to 97 (LAIAGDYMSAASFLGISALVF), 103 to 123 (GLIYSLGFLVGWPIILFLIAE), 148 to 168 (ILSACGSLVVVALYLIAQMVG), 183 to 203 (IAVVLVGVLMMMYVLFGGMLA), 206 to 226 (WVQIIKAVLLLFGASFMAFMV), 262 to 282 (ISALSLGLGLMFGTAGLPHIL), 303 to 323 (GFMGYFYILTFIIGFGAIMLV), 355 to 375 (LFLGFISAVAFATILAVVAGL), 404 to 424 (VSKITVLILGVIAIILGVLFE), 428 to 448 (IAFMVGLAFAIAASCNFPIIL), 464 to 484 (GGWLGLITAVVLMILGPTIWV), and 493 to 513 (IFPYEYPALFSISVAFLGIWF).

The protein belongs to the sodium:solute symporter (SSF) (TC 2.A.21) family.

The protein localises to the cell inner membrane. In terms of biological role, transports acetate. This Escherichia coli O6:K15:H31 (strain 536 / UPEC) protein is Cation/acetate symporter ActP.